Reading from the N-terminus, the 159-residue chain is Protein-export protein SecB (159 aa).

Belongs to the SecB family. In terms of assembly, homotetramer, a dimer of dimers. One homotetramer interacts with 1 SecA dimer.

The protein localises to the cytoplasm. In terms of biological role, one of the proteins required for the normal export of preproteins out of the cell cytoplasm. It is a molecular chaperone that binds to a subset of precursor proteins, maintaining them in a translocation-competent state. It also specifically binds to its receptor SecA. The chain is Protein-export protein SecB from Nitrobacter hamburgensis (strain DSM 10229 / NCIMB 13809 / X14).